Reading from the N-terminus, the 1017-residue chain is Protein HIRA (1017 aa).

WD repeat units follow at residues 11–53 (HNGK…QEDD) and 68–107 (NHLA…GPST). Residue Ser-111 is modified to Phosphoserine. WD repeat units follow at residues 129–168 (NHSG…EILA), 172–211 (GHSG…LETS), 220–263 (GGTT…TNMD), 266–322 (GHRK…PLVV), and 326–367 (LFDK…DPLS). Positions 421 to 479 (REMGSATSVAGVVNGESLEDIRKNLLKKQVETRTADGRRRITPLCIAQLDTGDFSTAFF) are interaction with ASF1A. The segment at 421–729 (REMGSATSVA…RLKCNREGKE (309 aa)) is interaction with CCNA1. Residues 439-475 (EDIRKNLLKKQVETRTADGRRRITPLCIAQLDTGDFS) form a required for repression of histone gene transcription region. Positions 494 to 509 (SSHSSPQLLPLDSSTP) are enriched in low complexity. A disordered region spans residues 494 to 555 (SSHSSPQLLP…AALSPSVLTT (62 aa)). The segment covering 536–555 (KDSMNATSTPAALSPSVLTT) has biased composition (polar residues). Phosphoserine is present on Ser-549. Thr-555 bears the Phosphothreonine; by CDK2 mark. Ser-557 carries the phosphoserine modification. Disordered stretches follow at residues 570-589 (TERS…TPTA) and 604-625 (PRDL…KASS). Residue Thr-576 is modified to Phosphothreonine. Ser-584 is subject to Phosphoserine. Thr-586 bears the Phosphothreonine mark. The segment at 593–826 (LKEQNLVKEL…LAGSDMTVSQ (234 aa)) is interaction with histone H2B. 2 interaction with PAX3 regions span residues 594 to 739 (KEQN…SRIL) and 740 to 828 (TAAG…SQIL). Residues 604–619 (PRDLLESSSDSDEKVP) show a composition bias toward basic and acidic residues. Phosphoserine occurs at positions 610, 611, 612, 614, 661, 675, and 687. Residues 738–1017 (ILTAAGSCDV…QEQLDILRDK (280 aa)) are interaction with histone H4.

It belongs to the WD repeat HIR1 family. In terms of assembly, interacts with histone H3-3B, PAX3 and PAX7. Interacts with histone H3.Y. Interacts with CCNA1, HIRIP3, NFU1/HIRIP5 and histone H2B. Part of a complex which includes ASF1A, CABIN1, histone H3.3, histone H4 and UBN1. Post-translationally, sumoylated. In terms of processing, phosphorylated by CDK2/CCNA1 and CDK2/CCNE1 on Thr-555 in vitro. Also phosphorylated on Thr-555 and Ser-687 in vivo. As to expression, expressed at high levels in kidney, pancreas and skeletal muscle and at lower levels in brain, heart, liver, lung, and placenta.

It localises to the nucleus. Its subcellular location is the PML body. In terms of biological role, cooperates with ASF1A to promote replication-independent chromatin assembly. Required for the periodic repression of histone gene transcription during the cell cycle. Required for the formation of senescence-associated heterochromatin foci (SAHF) and efficient senescence-associated cell cycle exit. This chain is Protein HIRA (HIRA), found in Homo sapiens (Human).